Here is a 405-residue protein sequence, read N- to C-terminus: Chalcone synthase (405 aa).

The active site involves Cys-170.

It belongs to the thiolase-like superfamily. Chalcone/stilbene synthases family.

It carries out the reaction (E)-4-coumaroyl-CoA + 3 malonyl-CoA + 3 H(+) = 2',4,4',6'-tetrahydroxychalcone + 3 CO2 + 4 CoA. It participates in secondary metabolite biosynthesis; flavonoid biosynthesis. In terms of biological role, the primary product of this enzyme is 4,2',4',6'-tetrahydroxychalcone (also termed naringenin-chalcone or chalcone) which can under specific conditions spontaneously isomerize into naringenin. This Equisetum arvense (Field horsetail) protein is Chalcone synthase (CHS).